Reading from the N-terminus, the 371-residue chain is Spermidine/putrescine import ATP-binding protein PotA (371 aa).

Positions Val-10 to Ile-240 constitute an ABC transporter domain. Residue Gly-42–Thr-49 participates in ATP binding.

The protein belongs to the ABC transporter superfamily. Spermidine/putrescine importer (TC 3.A.1.11.1) family. In terms of assembly, the complex is composed of two ATP-binding proteins (PotA), two transmembrane proteins (PotB and PotC) and a solute-binding protein (PotD).

Its subcellular location is the cell inner membrane. It catalyses the reaction ATP + H2O + polyamine-[polyamine-binding protein]Side 1 = ADP + phosphate + polyamineSide 2 + [polyamine-binding protein]Side 1.. Part of the ABC transporter complex PotABCD involved in spermidine/putrescine import. Responsible for energy coupling to the transport system. The sequence is that of Spermidine/putrescine import ATP-binding protein PotA from Haemophilus ducreyi (strain 35000HP / ATCC 700724).